The following is a 632-amino-acid chain: Serine/threonine-protein kinase plk-2 (632 aa).

The disordered stretch occupies residues 1 to 26 (MQRVQPSAARVKSQKKEKAPPDVPDV). A Protein kinase domain is found at 36-287 (YEKGKFLGKG…ARAVCRDHFF (252 aa)). ATP contacts are provided by residues 42 to 50 (LGKGGFAHC) and Lys-65. The active-site Proton acceptor is Asp-159. The segment at 313 to 334 (AEENVSPSGTIDQRGPHQAGRS) is disordered. 2 POLO box domains span residues 405-484 (WISK…YMND) and 506-588 (TLRV…RLVE).

Belongs to the protein kinase superfamily. Ser/Thr protein kinase family. CDC5/Polo subfamily. In terms of assembly, interacts (via POLO box domain) with mex-5 and mex-6. Interacts (via POLO box domain) with him-8 (via N-terminus); the interaction mediates plk-2 recruitment to the pairing region of X chromosomes during meiosis. Interacts with sun-1. May interact with nicotinic acetylcholine receptor. The cofactor is Mg(2+). In terms of tissue distribution, expressed in oocytes.

The protein localises to the nucleus. Its subcellular location is the cytoplasm. It is found in the cytoskeleton. It localises to the microtubule organizing center. The protein resides in the centrosome. The protein localises to the chromosome. Its subcellular location is the centromere. It is found in the kinetochore. The enzyme catalyses L-seryl-[protein] + ATP = O-phospho-L-seryl-[protein] + ADP + H(+). The catalysed reaction is L-threonyl-[protein] + ATP = O-phospho-L-threonyl-[protein] + ADP + H(+). In terms of biological role, serine/threonine-protein kinase which plays a role, during oogenesis, in chromosome pairing and synapsis, by facilitating the recruitment and attachment of meiotic chromosomes to the nuclear envelope during prophase. Promotes the localization of brc-1 to the short arm of homologous chromosomes during meiotic prophase I. Regulates the formation of sun-1 patches along the nuclear envelope. Promotes meiotic nuclei apoptosis in response to chromosomal asynapsis. Plays a redundant role with plk-1 in the establishment of cell polarity downstream of mex-5 and mex-6 during the first embryonic cell divisions. Plays a role in nicotinic acetylcholine receptor-mediated sensitivity to nicotine but not levamisole. Regulates motility. The sequence is that of Serine/threonine-protein kinase plk-2 from Caenorhabditis elegans.